The chain runs to 330 residues: Protein pelota homolog (330 aa).

This sequence belongs to the eukaryotic release factor 1 family. Pelota subfamily. In terms of assembly, monomer. The cofactor is a divalent metal cation.

The protein localises to the cytoplasm. Functionally, may function in recognizing stalled ribosomes, interact with stem-loop structures in stalled mRNA molecules, and effect endonucleolytic cleavage of the mRNA. May play a role in the release non-functional ribosomes and degradation of damaged mRNAs. Has endoribonuclease activity. The protein is Protein pelota homolog of Pyrobaculum islandicum (strain DSM 4184 / JCM 9189 / GEO3).